Here is a 779-residue protein sequence, read N- to C-terminus: MAFSKNILDSLPPLISKQIFEGFFGFEKENIRVDSRGKLALTPHPRELGEKTSHPYITTDFSESQIEIITPPLPSIAESLGFLETLHDLVSIELKDEYLWPQSAPPILPEREEDIPIAHFGGEFREQEEYRLQLAKIYGRKRQMFSGIHFNISLPERFLELLHEEGKQEQPFAEFREDIYMKTVRNFLRHRWFLICLLGASPVIHKSYRKHCIDMLSPFAKDAYHFPYATSIRNNICGYRNTQDFHLNYSTLTDYRESLQELVEKKVLRDIRENYAPIRIKTTTDPKRINHLEIRLLDLNPFFKTGVNPLHAEIIHIFLIYCLLCPEETSFTSKEQETANRNQEQAATEGLNPGAIICDADGNEQRLDKQLAHCLQEIQQTVSPHLPPEYRAGMEELERLVQNQASRPTDTLLKEIKQEGFTEWHMKQALKFLKKSHDEQFIFHGLRDMELSTQLLLRRAALRGVSFEIMDRQENFVCLEQAGKREYVMQASRTSLDNYISVLSMENKVITKKILDQAGINTPKGRSYSSPSEALADYPYYRGRAIVIKPKSTNFGIGITIIKENNRHDFFAQGIAQAFKHEATVLIENFSSGKEYRFFIVNDQVVGILHRVPANVTGDGTSSVQVLVTEKNKNPLRGRGYRTPLEKIKLEETEEMFLASQGYSFATVPAKDQRIYLRENSNISTGGDSIDFTDKVPQSYKDIAVRAAQALQVKITGLDMMIDSLEEDAAEDNFSIIELNFNPAIHIHCHPYIGKNRHLDDKILDALGFTGAEEAGEKA.

Residues 1-346 are glutamate--cysteine ligase; that stretch reads MAFSKNILDS…ETANRNQEQA (346 aa). The ATP-grasp domain maps to 512–768; the sequence is KKILDQAGIN…LDDKILDALG (257 aa). 539–597 is a binding site for ATP; sequence PYYRGRAIVIKPKSTNFGIGITIIKENNRHDFFAQGIAQAFKHEATVLIENFSSGKEYR. Mg(2+) contacts are provided by aspartate 719, glutamate 738, and asparagine 740. Residues aspartate 719, glutamate 738, and asparagine 740 each coordinate Mn(2+).

In the N-terminal section; belongs to the glutamate--cysteine ligase type 1 family. Type 2 subfamily. As to quaternary structure, monomer. Requires Mg(2+) as cofactor. It depends on Mn(2+) as a cofactor.

It carries out the reaction L-cysteine + L-glutamate + ATP = gamma-L-glutamyl-L-cysteine + ADP + phosphate + H(+). The enzyme catalyses gamma-L-glutamyl-L-cysteine + glycine + ATP = glutathione + ADP + phosphate + H(+). The protein operates within sulfur metabolism; glutathione biosynthesis; glutathione from L-cysteine and L-glutamate: step 1/2. It participates in sulfur metabolism; glutathione biosynthesis; glutathione from L-cysteine and L-glutamate: step 2/2. In terms of biological role, synthesizes glutathione from L-glutamate and L-cysteine via gamma-L-glutamyl-L-cysteine. The sequence is that of Glutathione biosynthesis bifunctional protein GshAB from Desulfotalea psychrophila (strain LSv54 / DSM 12343).